A 241-amino-acid polypeptide reads, in one-letter code: U2 small nuclear ribonucleoprotein B'' (241 aa).

Residues Q12 to S91 form the RRM 1 domain. A compositionally biased stretch (basic and acidic residues) spans L99 to S126. Residues L99 to L169 are disordered. Residues Q129–S152 show a composition bias toward low complexity. In terms of domain architecture, RRM 2 spans K167 to Q241.

It belongs to the RRM U1 A/B'' family. In terms of assembly, identified in the spliceosome B complex. Identified in the spliceosome C complex.

The protein localises to the nucleus. Its function is as follows. Involved in pre-mRNA splicing as component of the spliceosome. Associated with sn-RNP U2, where it contributes to the binding of stem loop IV of U2 snRNA. The chain is U2 small nuclear ribonucleoprotein B'' (snrpb2) from Dictyostelium discoideum (Social amoeba).